The primary structure comprises 64 residues: Conotoxin Im11.4 (64 aa).

A signal peptide spans 1 to 26; that stretch reads MMFRLTSVSCILLVIAFLNLVGLTNA. 4 disulfides stabilise this stretch: Cys-27-Cys-41, Cys-34-Cys-46, Cys-40-Cys-50, and Cys-45-Cys-54. His-57 is subject to Histidine amide. Positions 61-64 are excised as a propeptide; that stretch reads ATFQ.

It belongs to the conotoxin I2 superfamily. In terms of tissue distribution, expressed by the venom duct.

The protein localises to the secreted. The polypeptide is Conotoxin Im11.4 (Conus imperialis (Imperial cone)).